We begin with the raw amino-acid sequence, 107 residues long: Guanylin (107 aa).

A signal peptide spans 1-20 (MNTFLLSALCLGAWAALVGA). The propeptide occupies 21–92 (VTVQDGDFSF…LNRLAVIAQD (72 aa)). Cystine bridges form between C61–C74, C96–C104, and C99–C107.

Belongs to the guanylin family.

The protein resides in the secreted. Functionally, endogenous activator of intestinal guanylate cyclase. It stimulates this enzyme through the same receptor binding region as the heat-stable enterotoxins. The chain is Guanylin (GUCA2A) from Cavia porcellus (Guinea pig).